A 138-amino-acid polypeptide reads, in one-letter code: ATP synthase epsilon chain (138 aa).

Belongs to the ATPase epsilon chain family. As to quaternary structure, F-type ATPases have 2 components, CF(1) - the catalytic core - and CF(0) - the membrane proton channel. CF(1) has five subunits: alpha(3), beta(3), gamma(1), delta(1), epsilon(1). CF(0) has three main subunits: a, b and c.

It localises to the cellular thylakoid membrane. Functionally, produces ATP from ADP in the presence of a proton gradient across the membrane. The chain is ATP synthase epsilon chain from Microcystis aeruginosa (strain NIES-843 / IAM M-2473).